The sequence spans 216 residues: Peptide methionine sulfoxide reductase MsrA (216 aa).

C57 is a catalytic residue.

Belongs to the MsrA Met sulfoxide reductase family.

The catalysed reaction is L-methionyl-[protein] + [thioredoxin]-disulfide + H2O = L-methionyl-(S)-S-oxide-[protein] + [thioredoxin]-dithiol. The enzyme catalyses [thioredoxin]-disulfide + L-methionine + H2O = L-methionine (S)-S-oxide + [thioredoxin]-dithiol. Its function is as follows. Has an important function as a repair enzyme for proteins that have been inactivated by oxidation. Catalyzes the reversible oxidation-reduction of methionine sulfoxide in proteins to methionine. The chain is Peptide methionine sulfoxide reductase MsrA from Agrobacterium fabrum (strain C58 / ATCC 33970) (Agrobacterium tumefaciens (strain C58)).